Reading from the N-terminus, the 1657-residue chain is Ras GTPase-activating-like protein IQGAP1 (1657 aa).

An N-acetylserine modification is found at serine 2. Serine 2 is modified (phosphoserine). The Calponin-homology (CH) domain occupies 44–159; it reads LCHLEEAKRW…YCIHALSLYL (116 aa). Phosphotyrosine is present on tyrosine 172. The residue at position 330 (serine 330) is a Phosphoserine. The WW domain occupies 679–712; that stretch reads GDNNSKWVKHWVKGGYYYYHNLETQEGGWDEPPN. IQ domains are found at residues 745–774, 775–804, 805–834, and 835–864; these read NEGL…FLKK, QIPA…YLRS, HKDE…YFRD, and HIND…AEDP. Residues 956–1274 are C1; sequence GGLKALSKEK…FFQTACDVPE (319 aa). One can recognise a Ras-GAP domain in the interval 1020–1269; it reads YLLLRLFKTA…QKFRRFFQTA (250 aa). Positions 1276–1657 are C2; that stretch reads QDKFNVDEYS…FLLNKKFYGK (382 aa). The segment at 1410 to 1448 is disordered; it reads TPATSEQEAEHQRAMQRRAIRDAKTPDKMKKSKSVKEDS. A compositionally biased stretch (basic and acidic residues) spans 1417–1448; it reads EAEHQRAMQRRAIRDAKTPDKMKKSKSVKEDS. Serine 1441 is subject to Phosphoserine; by PKC. The residue at position 1443 (serine 1443) is a Phosphoserine; by PKC/PRKCE.

As to quaternary structure, interacts with CDC42; the interaction is demonstrated with IQGAP1 in GTP-bound and in nucleotide-free state. Interacts with RAC1. Does not interact with RHOA. Interacts with TSG101. Interacts with PAK6. Interacts with TMEM14B; this interaction increases IQGAP1 phosphorylation and induces its nuclear translocation. Interacts with SASH1. Interacts with PJVK. Interacts with SLC26A4; this interaction enhances the chloride-bicarbonate exchange activity of SLC26A4. Interacts with SVEP1. Interacts with ILK; the interaction is required for localization of IQGAP to the cell cortex. In terms of assembly, (Microbial infection) Interacts with ebolavirus vp40. (Microbial infection) Interacts with human cytomegalovirus protein UL5. As to quaternary structure, (Microbial infection) Interacts with C.jejuni invasion antigen D (CiaD). Phosphorylation of Ser-1443 by PKC/PRKCE prevents interaction between C1 and C2, allowing binding of nucleotide-free CDC42. Ser-1443 phosphorylation enhances the ability to promote neurite outgrowth. As to expression, expressed in the placenta, lung, and kidney. A lower level expression is seen in the heart, liver, skeletal muscle and pancreas.

Its subcellular location is the cell membrane. It is found in the nucleus. The protein localises to the cytoplasm. The protein resides in the cell cortex. It localises to the apical cell membrane. Its subcellular location is the basolateral cell membrane. In terms of biological role, plays a crucial role in regulating the dynamics and assembly of the actin cytoskeleton. Recruited to the cell cortex by interaction with ILK which allows it to cooperate with its effector DIAPH1 to locally stabilize microtubules and allow stable insertion of caveolae into the plasma membrane. Binds to activated CDC42 but does not stimulate its GTPase activity. Associates with calmodulin. May promote neurite outgrowth. May play a possible role in cell cycle regulation by contributing to cell cycle progression after DNA replication arrest. The chain is Ras GTPase-activating-like protein IQGAP1 (IQGAP1) from Homo sapiens (Human).